A 187-amino-acid polypeptide reads, in one-letter code: Elongation factor P (187 aa).

The protein belongs to the elongation factor P family.

It is found in the cytoplasm. Its pathway is protein biosynthesis; polypeptide chain elongation. Functionally, involved in peptide bond synthesis. Stimulates efficient translation and peptide-bond synthesis on native or reconstituted 70S ribosomes in vitro. Probably functions indirectly by altering the affinity of the ribosome for aminoacyl-tRNA, thus increasing their reactivity as acceptors for peptidyl transferase. This is Elongation factor P from Flavobacterium psychrophilum (strain ATCC 49511 / DSM 21280 / CIP 103535 / JIP02/86).